We begin with the raw amino-acid sequence, 93 residues long: MKKTLMLLVMVVALVILPFFINHGGEYGGSDGEAESQIQALAPQYKPWFQPLYEPASGEIESLLFTLQGSLGAAVIFYILGYCKGKQRRDDRA.

2 helical membrane-spanning segments follow: residues 5–25 (LMLL…NHGG) and 63–83 (LLFT…LGYC).

It belongs to the CbiN family. As to quaternary structure, forms an energy-coupling factor (ECF) transporter complex composed of an ATP-binding protein (A component, CbiO), a transmembrane protein (T component, CbiQ) and 2 possible substrate-capture proteins (S components, CbiM and CbiN) of unknown stoichimetry.

Its subcellular location is the cell inner membrane. Its pathway is cofactor biosynthesis; adenosylcobalamin biosynthesis. Functionally, part of the energy-coupling factor (ECF) transporter complex CbiMNOQ involved in cobalt import. This Salmonella paratyphi B (strain ATCC BAA-1250 / SPB7) protein is Cobalt transport protein CbiN.